We begin with the raw amino-acid sequence, 223 residues long: Thiamine-phosphate synthase (223 aa).

Residues 45 to 49 and asparagine 77 each bind 4-amino-2-methyl-5-(diphosphooxymethyl)pyrimidine; that span reads QYREK. Mg(2+) contacts are provided by aspartate 78 and aspartate 97. Threonine 116 contacts 4-amino-2-methyl-5-(diphosphooxymethyl)pyrimidine. 142–144 is a binding site for 2-[(2R,5Z)-2-carboxy-4-methylthiazol-5(2H)-ylidene]ethyl phosphate; the sequence is SYT. Lysine 145 lines the 4-amino-2-methyl-5-(diphosphooxymethyl)pyrimidine pocket. 2-[(2R,5Z)-2-carboxy-4-methylthiazol-5(2H)-ylidene]ethyl phosphate-binding positions include glycine 173 and 193–194; that span reads VT.

It belongs to the thiamine-phosphate synthase family. It depends on Mg(2+) as a cofactor.

The enzyme catalyses 2-[(2R,5Z)-2-carboxy-4-methylthiazol-5(2H)-ylidene]ethyl phosphate + 4-amino-2-methyl-5-(diphosphooxymethyl)pyrimidine + 2 H(+) = thiamine phosphate + CO2 + diphosphate. It catalyses the reaction 2-(2-carboxy-4-methylthiazol-5-yl)ethyl phosphate + 4-amino-2-methyl-5-(diphosphooxymethyl)pyrimidine + 2 H(+) = thiamine phosphate + CO2 + diphosphate. It carries out the reaction 4-methyl-5-(2-phosphooxyethyl)-thiazole + 4-amino-2-methyl-5-(diphosphooxymethyl)pyrimidine + H(+) = thiamine phosphate + diphosphate. It functions in the pathway cofactor biosynthesis; thiamine diphosphate biosynthesis; thiamine phosphate from 4-amino-2-methyl-5-diphosphomethylpyrimidine and 4-methyl-5-(2-phosphoethyl)-thiazole: step 1/1. Functionally, condenses 4-methyl-5-(beta-hydroxyethyl)thiazole monophosphate (THZ-P) and 2-methyl-4-amino-5-hydroxymethyl pyrimidine pyrophosphate (HMP-PP) to form thiamine monophosphate (TMP). The protein is Thiamine-phosphate synthase of Dictyoglomus thermophilum (strain ATCC 35947 / DSM 3960 / H-6-12).